The sequence spans 161 residues: Nucleotide-binding protein PFLU_4927 (161 aa).

Belongs to the YajQ family.

Nucleotide-binding protein. The chain is Nucleotide-binding protein PFLU_4927 from Pseudomonas fluorescens (strain SBW25).